The following is a 1084-amino-acid chain: CRISPR-associated endonuclease Cas9 (1084 aa).

The active-site For RuvC-like nuclease domain is the aspartate 8. Positions 8, 496, and 500 each coordinate Mn(2+). Positions threonine 504 to methionine 665 constitute an HNH Cas9-type domain. Histidine 573 acts as the Proton acceptor for HNH nuclease domain in catalysis. Histidine 727 contributes to the Mn(2+) binding site.

The protein belongs to the CRISPR-associated protein Cas9 family. Subtype II-C subfamily. Monomer. Binds crRNA and tracrRNA. Mg(2+) is required as a cofactor.

In terms of biological role, CRISPR (clustered regularly interspaced short palindromic repeat) is an adaptive immune system that provides protection against mobile genetic elements (viruses, transposable elements and conjugative plasmids). CRISPR clusters contain spacers, sequences complementary to antecedent mobile elements, and target invading nucleic acids. CRISPR clusters are transcribed and processed into CRISPR RNA (crRNA). In type II CRISPR systems correct processing of pre-crRNA requires a trans-encoded small RNA (tracrRNA), endogenous ribonuclease 3 (rnc) and this protein. The tracrRNA serves as a guide for ribonuclease 3-aided processing of pre-crRNA. Subsequently Cas9/crRNA/tracrRNA endonucleolytically cleaves linear or circular dsDNA target complementary to the spacer; Cas9 is inactive in the absence of the 2 guide RNAs (gRNA). Cas9 recognizes the protospacer adjacent motif (PAM) in the CRISPR repeat sequences to help distinguish self versus nonself, as targets within the bacterial CRISPR locus do not have PAMs. PAM recognition is also required for catalytic activity. The protein is CRISPR-associated endonuclease Cas9 of Corynebacterium diphtheriae (strain ATCC 700971 / NCTC 13129 / Biotype gravis).